A 432-amino-acid polypeptide reads, in one-letter code: D-amino acid dehydrogenase (432 aa).

Residue 3–17 (VVILGSGVVGVTSAW) coordinates FAD.

The protein belongs to the DadA oxidoreductase family. It depends on FAD as a cofactor.

It carries out the reaction a D-alpha-amino acid + A + H2O = a 2-oxocarboxylate + AH2 + NH4(+). The protein operates within amino-acid degradation; D-alanine degradation; NH(3) and pyruvate from D-alanine: step 1/1. In terms of biological role, oxidative deamination of D-amino acids. The chain is D-amino acid dehydrogenase from Salmonella paratyphi C (strain RKS4594).